The chain runs to 440 residues: Thymidine phosphorylase (440 aa).

Belongs to the thymidine/pyrimidine-nucleoside phosphorylase family. Homodimer.

It carries out the reaction thymidine + phosphate = 2-deoxy-alpha-D-ribose 1-phosphate + thymine. The protein operates within pyrimidine metabolism; dTMP biosynthesis via salvage pathway; dTMP from thymine: step 1/2. Functionally, the enzymes which catalyze the reversible phosphorolysis of pyrimidine nucleosides are involved in the degradation of these compounds and in their utilization as carbon and energy sources, or in the rescue of pyrimidine bases for nucleotide synthesis. The protein is Thymidine phosphorylase of Rhizobium meliloti (strain 1021) (Ensifer meliloti).